The chain runs to 187 residues: UPF0301 protein YPTS_3341 (187 aa).

Belongs to the UPF0301 (AlgH) family.

In Yersinia pseudotuberculosis serotype IB (strain PB1/+), this protein is UPF0301 protein YPTS_3341.